A 156-amino-acid polypeptide reads, in one-letter code: 6,7-dimethyl-8-ribityllumazine synthase (156 aa).

5-amino-6-(D-ribitylamino)uracil is bound by residues F23, 57 to 59 (AFE), and 81 to 83 (AVI). Residue 86 to 87 (ST) participates in (2S)-2-hydroxy-3-oxobutyl phosphate binding. Residue H89 is the Proton donor of the active site. F114 is a 5-amino-6-(D-ribitylamino)uracil binding site. A (2S)-2-hydroxy-3-oxobutyl phosphate-binding site is contributed by R128.

Belongs to the DMRL synthase family.

The enzyme catalyses (2S)-2-hydroxy-3-oxobutyl phosphate + 5-amino-6-(D-ribitylamino)uracil = 6,7-dimethyl-8-(1-D-ribityl)lumazine + phosphate + 2 H2O + H(+). It functions in the pathway cofactor biosynthesis; riboflavin biosynthesis; riboflavin from 2-hydroxy-3-oxobutyl phosphate and 5-amino-6-(D-ribitylamino)uracil: step 1/2. Functionally, catalyzes the formation of 6,7-dimethyl-8-ribityllumazine by condensation of 5-amino-6-(D-ribitylamino)uracil with 3,4-dihydroxy-2-butanone 4-phosphate. This is the penultimate step in the biosynthesis of riboflavin. The polypeptide is 6,7-dimethyl-8-ribityllumazine synthase (Brachyspira hyodysenteriae (strain ATCC 49526 / WA1)).